Here is a 463-residue protein sequence, read N- to C-terminus: Xanthine permease XanP (463 aa).

The next 12 helical transmembrane spans lie at 43–63 (LLAMFVAVITPALLICQALGL), 71–91 (IISMSLFASGVASIIQIKAWG), 93–113 (VGSGLLSIQGTSFNFVAPLIM), 126–146 (PTMMAALFGTLMLASCTEMVI), 156–176 (IITPLVSGVVVMIIGLSLIQV), 192–212 (TFGAPKNLLLAGVVLALIILL), 222–242 (VASLVIAMAAGYALAWFMGML), 260–280 (LYYGLGIEWSLLLPLMLVFMI), 352–372 (GFVVALMLIVLGLFPAVSGFV), 379–399 (VLGGATLVMFGTIAASGVRIV), 409–429 (ILIIALSLAVGLGVSQQPLIL), and 439–459 (LLSSGIAAGGITAIVLNLIFP).

Belongs to the nucleobase:cation symporter-2 (NCS2) (TC 2.A.40) family.

Its subcellular location is the cell inner membrane. It catalyses the reaction xanthine(in) + H(+)(in) = xanthine(out) + H(+)(out). Its function is as follows. Specific, proton motive force-dependent high-affinity transporter for xanthine. The protein is Xanthine permease XanP (xanP) of Escherichia coli O6:H1 (strain CFT073 / ATCC 700928 / UPEC).